The primary structure comprises 354 residues: Methylthioribose-1-phosphate isomerase (354 aa).

Substrate-binding positions include 58–60, Arg-101, and Gln-204; that span reads RGA. Asp-245 functions as the Proton donor in the catalytic mechanism. A substrate-binding site is contributed by 255 to 256; sequence NK.

The protein belongs to the eIF-2B alpha/beta/delta subunits family. MtnA subfamily.

The enzyme catalyses 5-(methylsulfanyl)-alpha-D-ribose 1-phosphate = 5-(methylsulfanyl)-D-ribulose 1-phosphate. It functions in the pathway amino-acid biosynthesis; L-methionine biosynthesis via salvage pathway; L-methionine from S-methyl-5-thio-alpha-D-ribose 1-phosphate: step 1/6. Its function is as follows. Catalyzes the interconversion of methylthioribose-1-phosphate (MTR-1-P) into methylthioribulose-1-phosphate (MTRu-1-P). This is Methylthioribose-1-phosphate isomerase from Xanthomonas axonopodis pv. citri (strain 306).